The primary structure comprises 65 residues: Hainantoxin-X-3 (65 aa).

The first 20 residues, 1–20, serve as a signal peptide directing secretion; it reads MNMKILVLVAVLCLVVSTHA. Positions 21-37 are excised as a propeptide; that stretch reads ERHSKTDMEDSPMIQER. 2 cysteine pairs are disulfide-bonded: Cys-46/Cys-59 and Cys-55/Cys-64.

Belongs to the neurotoxin 36 family. 02 subfamily. In terms of tissue distribution, expressed by the venom gland.

Its subcellular location is the secreted. In terms of biological role, reversibly blocks N-type calcium channels (Cav2.2/CACNA1B) in rat dorsal root ganglion cells. Elicits no toxic symptoms in either vertebrates or invertebrates during a period of 48 hours post-injection, when it was assayed in vivo by direct injection into mice and cockroaches. This is Hainantoxin-X-3 from Cyriopagopus hainanus (Chinese bird spider).